Consider the following 62-residue polypeptide: MAVPARHTSKQKKRSRRGHIKLSVPAMHYDATTGEYRLSHRVSPKGYYKGRQVVNNNDNGNN.

Positions 1–20 (MAVPARHTSKQKKRSRRGHI) are disordered. Positions 7-20 (HTSKQKKRSRRGHI) are enriched in basic residues.

It belongs to the bacterial ribosomal protein bL32 family.

The chain is Large ribosomal subunit protein bL32 from Lactobacillus acidophilus (strain ATCC 700396 / NCK56 / N2 / NCFM).